The chain runs to 416 residues: Chromate transport protein (416 aa).

Residues 1-21 (MSVANEESYRPSKATDATTEA) are disordered. 11 helical membrane passes run 99-119 (LGGV…MFAL), 128-148 (FVGT…IALI), 160-177 (LLDR…LAAI), 181-198 (DFWI…LLVL), 204-224 (ALLV…WAAP), 237-257 (ASVL…FGGA), 283-303 (LALS…VGYV), 308-328 (IGAV…SLIF), 341-361 (LHAF…ATTI), 371-391 (VPSL…LYAW), and 395-415 (LNVV…FPNQ).

This sequence belongs to the chromate ion transporter (CHR) (TC 2.A.51) family.

It localises to the cell inner membrane. In terms of biological role, this protein reduces chromate accumulation and is essential for chromate resistance. This Pseudomonas aeruginosa protein is Chromate transport protein.